Consider the following 622-residue polypeptide: Polypeptide N-acetylgalactosaminyltransferase 6 (622 aa).

The Cytoplasmic portion of the chain corresponds to 1 to 8 (MRLLRRRH). The chain crosses the membrane as a helical; Signal-anchor for type II membrane protein span at residues 9 to 28 (MSLRLAMLGSVFMLFLFIRQ). Over 29–622 (KDVSNQEQAM…RDPYQLWLFV (594 aa)) the chain is Lumenal. Asparagine 86 carries N-linked (GlcNAc...) asparagine glycosylation. The interval 176 to 285 (LPTTSVIIVF…HGWLEPLLAR (110 aa)) is catalytic subdomain A. The Mn(2+) site is built by aspartate 269, histidine 271, and histidine 407. Residues 348 to 410 (PIKSPTFAGG…PCSVVGHVFR (63 aa)) form a catalytic subdomain B region. The N-linked (GlcNAc...) asparagine glycan is linked to asparagine 476. In terms of domain architecture, Ricin B-type lectin spans 506-622 (TNQCLDVGEN…RDPYQLWLFV (117 aa)). Cysteine 509 and cysteine 527 are oxidised to a cystine. UDP-N-acetyl-alpha-D-galactosamine contacts are provided by aspartate 511, glutamate 514, histidine 528, and asparagine 533. 2 cysteine pairs are disulfide-bonded: cysteine 553-cysteine 566 and cysteine 597-cysteine 610.

It belongs to the glycosyltransferase 2 family. GalNAc-T subfamily. Requires Mn(2+) as cofactor.

It is found in the golgi apparatus membrane. It catalyses the reaction L-seryl-[protein] + UDP-N-acetyl-alpha-D-galactosamine = a 3-O-[N-acetyl-alpha-D-galactosaminyl]-L-seryl-[protein] + UDP + H(+). It carries out the reaction L-threonyl-[protein] + UDP-N-acetyl-alpha-D-galactosamine = a 3-O-[N-acetyl-alpha-D-galactosaminyl]-L-threonyl-[protein] + UDP + H(+). It participates in protein modification; protein glycosylation. In terms of biological role, catalyzes the initial reaction in O-linked oligosaccharide biosynthesis, the transfer of an N-acetyl-D-galactosamine residue to a serine or threonine residue on the protein receptor. May participate in synthesis of oncofetal fibronectin. Has activity toward Muc1a, Muc2, EA2 and fibronectin peptides. The chain is Polypeptide N-acetylgalactosaminyltransferase 6 (Galnt6) from Mus musculus (Mouse).